We begin with the raw amino-acid sequence, 659 residues long: Pesticidal crystal protein Cry3Ba (659 aa).

Residues 1–41 are disordered; that stretch reads MIRMGGRKMNPNNRSEYDTIKVTPNSELPTNHNQYPLADNP. Over residues 22–41 the composition is skewed to polar residues; that stretch reads VTPNSELPTNHNQYPLADNP.

It belongs to the delta endotoxin family.

Promotes colloidosmotic lysis by binding to the midgut epithelial cells of Coleoptera. This chain is Pesticidal crystal protein Cry3Ba (cry3Ba), found in Bacillus thuringiensis subsp. tolworthi.